Here is a 462-residue protein sequence, read N- to C-terminus: Probable threonine/serine transporter YbxG (462 aa).

The next 12 helical transmembrane spans lie at 17–37 (MIAL…STIS), 38–58 (WTGP…FFIM), 89–109 (ITAW…IIAV), 121–141 (PAWI…LISV), 154–174 (IKIV…FFGF), 190–210 (GGFF…VIAA), 238–258 (IIWR…TVYP), 276–296 (IGIT…AMSG), 331–351 (LYGT…NYIA), 355–375 (IFVY…FIIL), 398–418 (FAPF…VGMW), and 427–447 (LIVG…FGIG).

The protein belongs to the amino acid-polyamine-organocation (APC) superfamily.

It is found in the cell membrane. Probable threonine transporter. Is also active as a minor serine permease. The polypeptide is Probable threonine/serine transporter YbxG (ybxG) (Bacillus subtilis (strain 168)).